Here is an 87-residue protein sequence, read N- to C-terminus: UPF0250 protein YPK_3025 (87 aa).

Belongs to the UPF0250 family.

The polypeptide is UPF0250 protein YPK_3025 (Yersinia pseudotuberculosis serotype O:3 (strain YPIII)).